We begin with the raw amino-acid sequence, 178 residues long: Large ribosomal subunit protein uL6 (178 aa).

Belongs to the universal ribosomal protein uL6 family. As to quaternary structure, part of the 50S ribosomal subunit.

Its function is as follows. This protein binds to the 23S rRNA, and is important in its secondary structure. It is located near the subunit interface in the base of the L7/L12 stalk, and near the tRNA binding site of the peptidyltransferase center. In Streptococcus agalactiae serotype Ia (strain ATCC 27591 / A909 / CDC SS700), this protein is Large ribosomal subunit protein uL6.